Reading from the N-terminus, the 433-residue chain is D-amino acid dehydrogenase (433 aa).

Residue valine 3–tryptophan 17 participates in FAD binding.

It belongs to the DadA oxidoreductase family. Requires FAD as cofactor.

The catalysed reaction is a D-alpha-amino acid + A + H2O = a 2-oxocarboxylate + AH2 + NH4(+). Its pathway is amino-acid degradation; D-alanine degradation; NH(3) and pyruvate from D-alanine: step 1/1. Functionally, oxidative deamination of D-amino acids. This is D-amino acid dehydrogenase from Erwinia tasmaniensis (strain DSM 17950 / CFBP 7177 / CIP 109463 / NCPPB 4357 / Et1/99).